A 341-amino-acid polypeptide reads, in one-letter code: KH domain-containing RNA-binding protein QKI (341 aa).

The interval 11 to 82 is qua1 domain; involved in homodimerization; sequence PKPTPDYLMQ…PDAVGPIVQL (72 aa). In terms of domain architecture, KH spans 87–153; the sequence is YVPVKEYPDF…WEHLNEDLHV (67 aa). Residues 182–213 are qua2 domain; involved in RNA binding; the sequence is AAEGEDSLKKMQLMELAILNGTYRDANIKSPA. Phosphoserine is present on S188. R227 is modified (omega-N-methylarginine). R242 carries the asymmetric dimethylarginine; by CARM1; alternate modification. Position 242 is an omega-N-methylarginine; alternate (R242). R256 bears the Omega-N-methylarginine mark. The SH3-binding signature appears at 276-279; sequence PPGP. Positions 324 to 330 match the Nuclear localization signal motif; that stretch reads RVHPYQR.

Belongs to the quaking family. In terms of assembly, homodimer; does not require RNA to homodimerize. Able to heterodimerize with BICC1. Methylated by PRMT1. Post-translationally, tyrosine phosphorylated at its C-terminus, probably by FYN. Phosphorylation leads to decreased mRNA-binding affinity, affecting transport and/or stabilization of MBP mRNA. In terms of processing, ubiquitinated by RNF6 in macrophages, leading to its degradation.

Its subcellular location is the nucleus. The protein resides in the cytoplasm. Its function is as follows. RNA reader protein, which recognizes and binds specific RNAs, thereby regulating RNA metabolic processes, such as pre-mRNA splicing, circular RNA (circRNA) formation, mRNA export, mRNA stability and/or translation. Involved in various cellular processes, such as mRNA storage into stress granules, apoptosis, lipid deposition, interferon response, glial cell fate and development. Binds to the 5'-NACUAAY-N(1,20)-UAAY-3' RNA core sequence. Acts as a mRNA modification reader that specifically recognizes and binds mRNA transcripts modified by internal N(7)-methylguanine (m7G). Promotes the formation of circular RNAs (circRNAs) during the epithelial to mesenchymal transition and in cardiomyocytes: acts by binding to sites flanking circRNA-forming exons. CircRNAs are produced by back-splicing circularization of pre-mRNAs. Plays a central role in myelinization via 3 distinct mechanisms. First, acts by protecting and promoting stability of target mRNAs such as MBP, SIRT2 and CDKN1B, which promotes oligodendrocyte differentiation. Second, participates in mRNA transport by regulating the nuclear export of MBP mRNA. Finally, indirectly regulates mRNA splicing of MAG pre-mRNA during oligodendrocyte differentiation by acting as a negative regulator of MAG exon 12 alternative splicing: acts by binding to HNRNPA1 mRNA splicing factor, preventing its translation. Involved in microglia differentiation and remyelination by regulating microexon alternative splicing of the Rho GTPase pathway. Involved in macrophage differentiation: promotes monocyte differentiation by regulating pre-mRNA splicing in naive peripheral blood monocytes. Acts as an important regulator of muscle development: required for the contractile function of cardiomyocytes by regulating alternative splicing of cardiomyocyte transcripts. Acts as a negative regulator of thermogenesis by decreasing stability, nuclear export and translation of mRNAs encoding PPARGC1A and UCP1. Also required for visceral endoderm function and blood vessel development. May also play a role in smooth muscle development. In addition to its RNA-binding activity, also acts as a nuclear transcription coactivator for SREBF2/SREBP2. The protein is KH domain-containing RNA-binding protein QKI of Bos taurus (Bovine).